Here is a 334-residue protein sequence, read N- to C-terminus: DGAT1/2-independent enzyme synthesizing storage lipids (334 aa).

Residues 1-50 lie on the Lumenal side of the membrane; sequence MTNKNQSFGVGQDSMSSMTCLIHVLEAWFGVEHLEDYWNFANYLLWVFTP. A glycan (N-linked (GlcNAc...) asparagine) is linked at Asn-5. A helical transmembrane segment spans residues 51 to 71; sequence LLLLILPYFTIFLLYLTIIFL. The Cytoplasmic portion of the chain corresponds to 72–125; it reads HIYKRKNVLKEAYSHNLWDGARKTVATLWDGHAAVWHGYEVHGMEKIPEEGPAL. Residues 126 to 146 form a helical membrane-spanning segment; it reads IIFYHGAIPIDFYYFMAKIFI. His-130 is a catalytic residue. Over 147 to 334 the chain is Lumenal; the sequence is HKGRTCRVVA…NKQKINQKTL (188 aa).

This sequence belongs to the diacylglycerol acyltransferase family. Highly divergent.

It localises to the endoplasmic reticulum membrane. It carries out the reaction a 1,2-diacylglycerol + a 1,2-diacyl-sn-glycero-3-phosphocholine = a triacylglycerol + a 1-acyl-sn-glycero-3-phosphocholine. The catalysed reaction is a 1-O-alkyl-2-acyl-sn-glycero-3-phosphocholine + a 1,2-diacylglycerol = a 1-O-alkyl-sn-glycero-3-phosphocholine + a triacylglycerol. It catalyses the reaction a 2-acylglycerol + an acyl-CoA = a 1,2-diacylglycerol + CoA. The enzyme catalyses an acyl-CoA + a 1,2-diacyl-sn-glycerol = a triacyl-sn-glycerol + CoA. It carries out the reaction 2-(9Z-octadecenoyl)-glycerol + (9Z)-octadecenoyl-CoA = 1,2-di-(9Z-octadecenoyl)-glycerol + CoA. The catalysed reaction is 1,2-di-(9Z-octadecenoyl)-sn-glycerol + (9Z)-octadecenoyl-CoA = 1,2,3-tri-(9Z-octadecenoyl)-glycerol + CoA. Acyltransferase activity is specifically inhibited by TMX1 at the endoplasmic reticulum, restricting accumulation of triacylglycerol. Its function is as follows. Catalytic subunit of the alternative triglyceride biosynthesis pathway, which mediates formation of triacylglycerol from diacylglycerol and membrane phospholipids. Synthesizes triacylglycerol at the expense of membrane phospholipids, such as phosphatidylcholine (PC) and its ether-linked form (ePC), thereby altering the composition of membranes. The alternative triglyceride biosynthesis pathway is probably required to provide the energy required for rapid growth when fuel sources are limiting. It maintains mitochondrial function during periods of extracellular lipid starvation. Can also use acyl-CoA as donor: acts as a acyl-CoA:monoacylglycerol acyltransferase (MGAT), but also shows acyl-CoA:diacylglycerol acyltransferase (DGAT) activity. This is DGAT1/2-independent enzyme synthesizing storage lipids (TMEM68) from Bos taurus (Bovine).